The chain runs to 215 residues: Peroxiredoxin (215 aa).

Residues 6 to 161 (PLIGEEFPRV…ILRAVKALQT (156 aa)) enclose the Thioredoxin domain. The active-site Cysteine sulfenic acid (-SOH) intermediate is the Cys48. Arg124 is a binding site for substrate. Cys205 and Cys211 are joined by a disulfide.

This sequence belongs to the peroxiredoxin family. Prx6 subfamily. In terms of assembly, homodecamer. Pentamer of dimers that assemble into a ring structure.

It localises to the cytoplasm. The enzyme catalyses a hydroperoxide + [thioredoxin]-dithiol = an alcohol + [thioredoxin]-disulfide + H2O. Its function is as follows. Thiol-specific peroxidase that catalyzes the reduction of hydrogen peroxide and organic hydroperoxides to water and alcohols, respectively. Plays a role in cell protection against oxidative stress by detoxifying peroxides. The sequence is that of Peroxiredoxin from Thermotoga maritima (strain ATCC 43589 / DSM 3109 / JCM 10099 / NBRC 100826 / MSB8).